Consider the following 667-residue polypeptide: Probable potassium transport system protein Kup (667 aa).

12 helical membrane-spanning segments follow: residues 16-36 (GFII…LYTM), 58-78 (VSLI…LIAL), 101-121 (WLII…ALTP), 146-166 (TNVI…QRFG), 167-187 (TGVI…VLGI), 221-241 (IFIL…YSDL), 253-273 (WPFV…WILA), 294-314 (VYLV…LISG), 343-363 (LYIP…VLYF), 373-393 (YGLA…YYLI), 399-419 (PLLA…FFLA), and 424-444 (FMHG…VMVI).

Belongs to the HAK/KUP transporter (TC 2.A.72) family.

It is found in the cell membrane. It catalyses the reaction K(+)(in) + H(+)(in) = K(+)(out) + H(+)(out). Transport of potassium into the cell. Likely operates as a K(+):H(+) symporter. This Streptococcus equi subsp. equi (strain 4047) protein is Probable potassium transport system protein Kup.